The sequence spans 122 residues: Large ribosomal subunit protein uL14 (122 aa).

It belongs to the universal ribosomal protein uL14 family. In terms of assembly, part of the 50S ribosomal subunit. Forms a cluster with proteins L3 and L19. In the 70S ribosome, L14 and L19 interact and together make contacts with the 16S rRNA in bridges B5 and B8.

Binds to 23S rRNA. Forms part of two intersubunit bridges in the 70S ribosome. In Clostridium botulinum (strain 657 / Type Ba4), this protein is Large ribosomal subunit protein uL14.